A 314-amino-acid chain; its full sequence is Methenyltetrahydromethanopterin cyclohydrolase (314 aa).

It belongs to the MCH family.

It is found in the cytoplasm. It catalyses the reaction 5,10-methenyl-5,6,7,8-tetrahydromethanopterin + H2O = N(5)-formyl-5,6,7,8-tetrahydromethanopterin + H(+). It participates in one-carbon metabolism; methanogenesis from CO(2); 5,10-methenyl-5,6,7,8-tetrahydromethanopterin from CO(2): step 3/3. Catalyzes the reversible interconversion of 5-formyl-H(4)MPT to methenyl-H(4)MPT(+). This is Methenyltetrahydromethanopterin cyclohydrolase from Methanocorpusculum labreanum (strain ATCC 43576 / DSM 4855 / Z).